The chain runs to 76 residues: Putative membrane protein insertion efficiency factor (76 aa).

Belongs to the UPF0161 family.

Its subcellular location is the cell inner membrane. Functionally, could be involved in insertion of integral membrane proteins into the membrane. In Porphyromonas gingivalis (strain ATCC 33277 / DSM 20709 / CIP 103683 / JCM 12257 / NCTC 11834 / 2561), this protein is Putative membrane protein insertion efficiency factor.